Consider the following 427-residue polypeptide: 3-phosphoshikimate 1-carboxyvinyltransferase (427 aa).

Residues K23, S24, and R28 each coordinate 3-phosphoshikimate. K23 lines the phosphoenolpyruvate pocket. Positions 97 and 125 each coordinate phosphoenolpyruvate. 7 residues coordinate 3-phosphoshikimate: S170, S171, Q172, S198, D314, N337, and K341. Phosphoenolpyruvate is bound at residue Q172. Residue D314 is the Proton acceptor of the active site. Residues R345, R387, and K412 each coordinate phosphoenolpyruvate.

Belongs to the EPSP synthase family. In terms of assembly, monomer.

It is found in the cytoplasm. The catalysed reaction is 3-phosphoshikimate + phosphoenolpyruvate = 5-O-(1-carboxyvinyl)-3-phosphoshikimate + phosphate. It participates in metabolic intermediate biosynthesis; chorismate biosynthesis; chorismate from D-erythrose 4-phosphate and phosphoenolpyruvate: step 6/7. Functionally, catalyzes the transfer of the enolpyruvyl moiety of phosphoenolpyruvate (PEP) to the 5-hydroxyl of shikimate-3-phosphate (S3P) to produce enolpyruvyl shikimate-3-phosphate and inorganic phosphate. In Buchnera aphidicola subsp. Acyrthosiphon pisum (strain 5A), this protein is 3-phosphoshikimate 1-carboxyvinyltransferase.